The following is a 243-amino-acid chain: Tyrosine recombinase XerD-like (243 aa).

One can recognise a Core-binding (CB) domain in the interval 1–72; that stretch reads MKEYIRPFLN…AVNQFLYFLY (72 aa). One can recognise a Tyr recombinase domain in the interval 85 to 243; sequence LPKVSVSKEQ…KTMITLEKYR (159 aa). Residues K149 and R210 contribute to the active site. Y242 serves as the catalytic O-(3'-phospho-DNA)-tyrosine intermediate.

It belongs to the 'phage' integrase family. XerD-like subfamily.

The protein resides in the cytoplasm. Putative tyrosine recombinase. Not involved in the cutting and rejoining of the recombining DNA molecules on dif(SL) site. The chain is Tyrosine recombinase XerD-like from Streptococcus sanguinis (strain SK36).